The sequence spans 151 residues: 3-dehydroquinate dehydratase (151 aa).

Catalysis depends on Tyr-24, which acts as the Proton acceptor. Substrate-binding residues include Asn-76, His-82, and Asp-89. The active-site Proton donor is the His-102. Substrate-binding positions include 103-104 (VS) and Arg-113.

The protein belongs to the type-II 3-dehydroquinase family. Homododecamer.

The enzyme catalyses 3-dehydroquinate = 3-dehydroshikimate + H2O. It participates in metabolic intermediate biosynthesis; chorismate biosynthesis; chorismate from D-erythrose 4-phosphate and phosphoenolpyruvate: step 3/7. Functionally, catalyzes a trans-dehydration via an enolate intermediate. In Afipia carboxidovorans (strain ATCC 49405 / DSM 1227 / KCTC 32145 / OM5) (Oligotropha carboxidovorans), this protein is 3-dehydroquinate dehydratase.